Consider the following 397-residue polypeptide: Enoyl-[acyl-carrier-protein] reductase [NADH] (397 aa).

Residues 48 to 53, 74 to 75, 111 to 112, and 139 to 140 contribute to the NAD(+) site; these read GASTGY, FE, DA, and VA. Tyrosine 225 lines the substrate pocket. Tyrosine 235 serves as the catalytic Proton donor. NAD(+) contacts are provided by residues lysine 244 and 273–275; that span reads VVT.

This sequence belongs to the TER reductase family. Monomer.

It catalyses the reaction a 2,3-saturated acyl-[ACP] + NAD(+) = a (2E)-enoyl-[ACP] + NADH + H(+). It participates in lipid metabolism; fatty acid biosynthesis. In terms of biological role, involved in the final reduction of the elongation cycle of fatty acid synthesis (FAS II). Catalyzes the reduction of a carbon-carbon double bond in an enoyl moiety that is covalently linked to an acyl carrier protein (ACP). The sequence is that of Enoyl-[acyl-carrier-protein] reductase [NADH] from Burkholderia mallei (strain NCTC 10247).